The following is a 242-amino-acid chain: Small ribosomal subunit protein uS2 (242 aa).

Belongs to the universal ribosomal protein uS2 family.

The protein is Small ribosomal subunit protein uS2 of Shewanella piezotolerans (strain WP3 / JCM 13877).